Consider the following 388-residue polypeptide: Dual-specificity RNA methyltransferase RlmN (388 aa).

The Proton acceptor role is filled by Glu-109. The Radical SAM core domain maps to Glu-115 to Asp-354. Cysteines 122 and 359 form a disulfide. Cys-129, Cys-133, and Cys-136 together coordinate [4Fe-4S] cluster. Residues Gly-183–Glu-184, Ser-215, Ser-237–His-239, and Asn-316 each bind S-adenosyl-L-methionine. Cys-359 acts as the S-methylcysteine intermediate in catalysis.

It belongs to the radical SAM superfamily. RlmN family. [4Fe-4S] cluster serves as cofactor.

Its subcellular location is the cytoplasm. It catalyses the reaction adenosine(2503) in 23S rRNA + 2 reduced [2Fe-2S]-[ferredoxin] + 2 S-adenosyl-L-methionine = 2-methyladenosine(2503) in 23S rRNA + 5'-deoxyadenosine + L-methionine + 2 oxidized [2Fe-2S]-[ferredoxin] + S-adenosyl-L-homocysteine. The catalysed reaction is adenosine(37) in tRNA + 2 reduced [2Fe-2S]-[ferredoxin] + 2 S-adenosyl-L-methionine = 2-methyladenosine(37) in tRNA + 5'-deoxyadenosine + L-methionine + 2 oxidized [2Fe-2S]-[ferredoxin] + S-adenosyl-L-homocysteine. Its function is as follows. Specifically methylates position 2 of adenine 2503 in 23S rRNA and position 2 of adenine 37 in tRNAs. m2A2503 modification seems to play a crucial role in the proofreading step occurring at the peptidyl transferase center and thus would serve to optimize ribosomal fidelity. This Klebsiella pneumoniae (strain 342) protein is Dual-specificity RNA methyltransferase RlmN.